The sequence spans 73 residues: U-scoloptoxin(22)-Cw1a (73 aa).

The first 24 residues, 1-24, serve as a signal peptide directing secretion; the sequence is MRRFVFLAFVLVLFVIANLDSSSA.

The protein belongs to the scoloptoxin-22 family. In terms of processing, contains 1 disulfide bond. As to expression, expressed by the venom gland.

It localises to the secreted. This Cormocephalus westwoodi (Westwood's green centipede) protein is U-scoloptoxin(22)-Cw1a.